The primary structure comprises 408 residues: E3 ubiquitin-protein ligase IE2 (408 aa).

Over residues M1–P10 the composition is skewed to polar residues. 2 disordered regions span residues M1–Q67 and Q176–P199. Residues S13–I25 show a composition bias toward basic residues. A compositionally biased stretch (low complexity) spans S30–S47. 4 consecutive repeat copies span residues Q34–S41, Q42–S49, R51–E54, and R55–E58. A 2 X 8 AA tandem repeats of Q-P-S-S-S-S-R-S region spans residues Q34–S49. The tract at residues R51 to E58 is 2 X 4 AA tandem repeats of R-R-Q-E. Low complexity predominate over residues S183–S197. The RING-type zinc-finger motif lies at C207–A255.

It belongs to the alphabaculovirus IE2 protein family. In terms of assembly, homooligomer. Post-translationally, auto-ubiquitinated.

The protein localises to the host nucleus. The catalysed reaction is S-ubiquitinyl-[E2 ubiquitin-conjugating enzyme]-L-cysteine + [acceptor protein]-L-lysine = [E2 ubiquitin-conjugating enzyme]-L-cysteine + N(6)-ubiquitinyl-[acceptor protein]-L-lysine.. RING-finger E3 ubiquitin ligase that plays an important regulatory role during the initial stages of infection. Migrates to specific nuclear foci early in infection supposely to prepare the sites for viral transcription and replication by targeting and ubiquitinating host proteins. Acts as a transcriptional activator and activates a number of viral promoters including itself, IE1 and the promoter of 39K gene. This is E3 ubiquitin-protein ligase IE2 (IE2) from Lepidoptera (butterflies and moths).